The sequence spans 324 residues: Bile salt hydrolase/transferase (324 aa).

C2 acts as the Nucleophile; acyl-thioester intermediate in catalysis. Deoxycholate is bound by residues C2 and R16. N79 is a taurine binding site.

This sequence belongs to the peptidase C59 family. In terms of assembly, homotetramer. The tetramer consists of a dimer of dimers.

The enzyme catalyses glycocholate + H2O = cholate + glycine. It carries out the reaction glycodeoxycholate + H2O = deoxycholate + glycine. The catalysed reaction is chenodeoxycholate + glycine = glycochenodeoxycholate + H2O. It catalyses the reaction cholate + taurine = taurocholate + H2O. The enzyme catalyses taurodeoxycholate + H2O = deoxycholate + taurine. It carries out the reaction taurochenodeoxycholate + H2O = chenodeoxycholate + taurine. The catalysed reaction is an L-alpha-amino acid + cholate = an N-choloyl-L-alpha-amino acid + H2O. It catalyses the reaction an L-alpha-amino acid + taurocholate = an N-choloyl-L-alpha-amino acid + taurine. The enzyme catalyses glycocholate + an L-alpha-amino acid = an N-choloyl-L-alpha-amino acid + glycine. Its pathway is lipid metabolism; bile acid biosynthesis. In terms of biological role, possesses dual functions in bile acid metabolism. Acts as a bile salt hydrolase that catalyzes the deconjugation of glycine- and taurine-linked bile salts, which occurs naturally in the intestines of animals, releasing amino acid residues and deconjugated bile salts (bile acids). Can hydrolyze the amide bond in the bile salts glycocholate (GCA), glycodeoxycholate (GDCA), glycochenodeoxycholate (GCDCA), taurocholate (TCA), taurodeoxycholate (TDCA) and taurochenodeoxycholate (TCDCA). Shows a preference for glycine-conjugated bile acids as substrates. Also acts as an amine N-acyltransferase that conjugates a wide variety of amino acids to conjugated and non-conjugated bile acids, thus producing bacterial bile acid amidates (BBAAs) - also named microbially conjugated bile acids (MCBAs) - in the gastrointestinal tract. These BBAAs may facilitate communication between the microbiota and host through the activation of host ligand-activated transcription factors. In Lactiplantibacillus plantarum (strain ATCC BAA-793 / NCIMB 8826 / WCFS1) (Lactobacillus plantarum), this protein is Bile salt hydrolase/transferase.